A 242-amino-acid chain; its full sequence is Transcriptional regulatory protein GltR (242 aa).

Residues 7-123 form the Response regulatory domain; that stretch reads SILLVDDDQE…ELLARIKALL (117 aa). The residue at position 56 (Asp56) is a 4-aspartylphosphate. The ompR/PhoB-type DNA-binding region spans 134 to 234; that stretch reads GDVLAFEDWR…VRGSGYLLAA (101 aa).

In terms of processing, phosphorylated by GtrS.

It is found in the cytoplasm. Phosphorylation of GltR induces its dissociation from DNA leading to transcriptional activation. In terms of biological role, member of the two-component regulatory system GtrS/GltR involved in the regulation of glucose metabolism and transport, as well as regulation of the exotoxin A gene expression. GltR controls the transcription of genes involved in glucose metabolism (glk and edd/gap-1) and transport (oprB) as well as the expression of toxA that encodes exotoxin A, the primary virulence factor. Acts as a repressor that is released from its target operators upon phosphorylation. Contributes to modulation of the type III secretion system (T3SS) in response to host cells via the regulation of the OprB transport system. The protein is Transcriptional regulatory protein GltR of Pseudomonas aeruginosa (strain ATCC 15692 / DSM 22644 / CIP 104116 / JCM 14847 / LMG 12228 / 1C / PRS 101 / PAO1).